We begin with the raw amino-acid sequence, 327 residues long: Phenylalanine--tRNA ligase alpha subunit (327 aa).

Residue Glu252 coordinates Mg(2+).

This sequence belongs to the class-II aminoacyl-tRNA synthetase family. Phe-tRNA synthetase alpha subunit type 1 subfamily. In terms of assembly, tetramer of two alpha and two beta subunits. Mg(2+) is required as a cofactor.

It is found in the cytoplasm. It carries out the reaction tRNA(Phe) + L-phenylalanine + ATP = L-phenylalanyl-tRNA(Phe) + AMP + diphosphate + H(+). The polypeptide is Phenylalanine--tRNA ligase alpha subunit (Salmonella newport (strain SL254)).